The chain runs to 194 residues: MAKQKRKVPEVTEKKNKKLKKASAEGPLLGPEAAPSGEGAGSKGEAVLRPGLDAEPELSPEEQRVLERKLKKERKKEERQRLREAGLVAQHPPARRSGAELALDYLCRWAQKHKNWRFQKTRQTWLLLHMYDSDKVPDEHFSTLLAYLEGLQGRARELTVQKAEALMRELDEEGSDPPLPGRAQRIRQVLQLLS.

The segment at 1–83 (MAKQKRKVPE…RKKEERQRLR (83 aa)) is disordered. Residues Ser23 and Ser59 each carry the phosphoserine modification. The segment covering 61–83 (EEQRVLERKLKKERKKEERQRLR) has biased composition (basic and acidic residues). Phosphoserine occurs at positions 97 and 175.

Secreted from the instestine, secretion is induced by feeding and cholesterol absorption.

The protein localises to the secreted. Hormone secreted from the intestine in response to cholesterol, where it acts to inhibit cholesterol synthesis in the liver and VLDL secretion,leading to a reduction in circulating cholesterol levels. Acts through binding to its receptor, GPR146. The polypeptide is Protein cholesin (Homo sapiens (Human)).